A 97-amino-acid polypeptide reads, in one-letter code: Protein RnfH (97 aa).

It belongs to the UPF0125 (RnfH) family.

This Proteus mirabilis (strain HI4320) protein is Protein RnfH.